We begin with the raw amino-acid sequence, 490 residues long: Cysteine desulfurase, mitochondrial (490 aa).

Pyridoxal 5'-phosphate contacts are provided by residues 161-162, Asn241, Gln269, and 289-291; these read AT and SSH. Lys292 is subject to N6-(pyridoxal phosphate)lysine. Residue Thr329 participates in pyridoxal 5'-phosphate binding. Residue Cys414 is the Cysteine persulfide intermediate of the active site. A [2Fe-2S] cluster-binding site is contributed by Cys414.

It belongs to the class-V pyridoxal-phosphate-dependent aminotransferase family. NifS/IscS subfamily. The cofactor is pyridoxal 5'-phosphate.

It is found in the mitochondrion. The enzyme catalyses (sulfur carrier)-H + L-cysteine = (sulfur carrier)-SH + L-alanine. Catalyzes the removal of elemental sulfur from cysteine to produce alanine. It supplies the inorganic sulfur for iron-sulfur (Fe-S) clusters. Plays a role in both tRNA-processing and mitochondrial metabolism. Involved in the 2-thio-modification of both 5-carboxymethylaminomethyl-2-thiouridine in mitochondrial tRNAs and 5-methoxycarbonylmethyl-2-thiouridine (mcm5s2U) in cytoplasmic tRNAs. This chain is Cysteine desulfurase, mitochondrial, found in Eremothecium gossypii (strain ATCC 10895 / CBS 109.51 / FGSC 9923 / NRRL Y-1056) (Yeast).